The chain runs to 565 residues: Adenine deaminase (565 aa).

It belongs to the metallo-dependent hydrolases superfamily. Adenine deaminase family. Mn(2+) serves as cofactor.

It carries out the reaction adenine + H2O + H(+) = hypoxanthine + NH4(+). This is Adenine deaminase from Cereibacter sphaeroides (strain KD131 / KCTC 12085) (Rhodobacter sphaeroides).